The sequence spans 842 residues: Leucine--tRNA ligase (842 aa).

The 'HIGH' region signature appears at 44–55 (PYPSANGLHVGH). The 'KMSKS' region motif lies at 619–623 (KMSKS). ATP is bound at residue K622.

The protein belongs to the class-I aminoacyl-tRNA synthetase family.

Its subcellular location is the cytoplasm. The catalysed reaction is tRNA(Leu) + L-leucine + ATP = L-leucyl-tRNA(Leu) + AMP + diphosphate. This chain is Leucine--tRNA ligase, found in Borrelia hermsii (strain HS1 / DAH).